Here is a 287-residue protein sequence, read N- to C-terminus: Energy-coupling factor transporter ATP-binding protein EcfA (287 aa).

Positions F19–D252 constitute an ABC transporter domain. G52–S59 serves as a coordination point for ATP.

This sequence belongs to the ABC transporter superfamily. Energy-coupling factor EcfA family. As to quaternary structure, forms a stable energy-coupling factor (ECF) transporter complex composed of 2 membrane-embedded substrate-binding proteins (S component), 2 ATP-binding proteins (A component) and 2 transmembrane proteins (T component).

The protein localises to the cell membrane. In terms of biological role, ATP-binding (A) component of a common energy-coupling factor (ECF) ABC-transporter complex. Unlike classic ABC transporters this ECF transporter provides the energy necessary to transport a number of different substrates. In Malacoplasma penetrans (strain HF-2) (Mycoplasma penetrans), this protein is Energy-coupling factor transporter ATP-binding protein EcfA.